A 646-amino-acid chain; its full sequence is Ribonuclease Y (646 aa).

Residues 4-24 (VLVVLLSLVLVVLSVLILAVA) form a helical membrane-spanning segment. 2 disordered regions span residues 43–62 (PRTP…DFDE) and 69–118 (LPAP…HGGS). The region spanning 336–402 (VVTVLHLPGD…RITLAALVSD (67 aa)) is the KH domain. The 94-residue stretch at 462 to 555 (VLAHLIESAH…TQAADQISGG (94 aa)) folds into the HD domain.

This sequence belongs to the RNase Y family.

It localises to the cell membrane. In terms of biological role, endoribonuclease that initiates mRNA decay. The polypeptide is Ribonuclease Y (Frankia casuarinae (strain DSM 45818 / CECT 9043 / HFP020203 / CcI3)).